Here is a 291-residue protein sequence, read N- to C-terminus: MFHGSMVALVTPMQVDGAIDDVALRELVEWHIAEGTHALVAVGTTGESATLEMREHVAVIQTVVEQARGRVPVIAGTGANATHEAIELTRAAMEVKADAALLVSPYYNKPTQEGLFQHYSAIAEHCHFPIILYNVPGRTAGDILPETVARLAPRADIIGIKEASGKVERVAEILALCGDQVQVYSGDDGAALAAMALGARGVISVTANAAPRLMARMCDLALAGDFVGARAVNAQLTGLHRDLFLESNPIPVKWALHEMGRMESVLRLPLTTLSSVHHERLRESLRRAQCI.

Thr-45 provides a ligand contact to pyruvate. The active-site Proton donor/acceptor is Tyr-133. Lys-161 acts as the Schiff-base intermediate with substrate in catalysis. Ile-203 provides a ligand contact to pyruvate.

The protein belongs to the DapA family. As to quaternary structure, homotetramer; dimer of dimers.

Its subcellular location is the cytoplasm. The enzyme catalyses L-aspartate 4-semialdehyde + pyruvate = (2S,4S)-4-hydroxy-2,3,4,5-tetrahydrodipicolinate + H2O + H(+). It participates in amino-acid biosynthesis; L-lysine biosynthesis via DAP pathway; (S)-tetrahydrodipicolinate from L-aspartate: step 3/4. In terms of biological role, catalyzes the condensation of (S)-aspartate-beta-semialdehyde [(S)-ASA] and pyruvate to 4-hydroxy-tetrahydrodipicolinate (HTPA). This Acidithiobacillus ferrooxidans (strain ATCC 23270 / DSM 14882 / CIP 104768 / NCIMB 8455) (Ferrobacillus ferrooxidans (strain ATCC 23270)) protein is 4-hydroxy-tetrahydrodipicolinate synthase.